Here is a 119-residue protein sequence, read N- to C-terminus: Large ribosomal subunit protein bL20 (119 aa).

The protein belongs to the bacterial ribosomal protein bL20 family.

In terms of biological role, binds directly to 23S ribosomal RNA and is necessary for the in vitro assembly process of the 50S ribosomal subunit. It is not involved in the protein synthesizing functions of that subunit. The sequence is that of Large ribosomal subunit protein bL20 from Bacillus velezensis (strain DSM 23117 / BGSC 10A6 / LMG 26770 / FZB42) (Bacillus amyloliquefaciens subsp. plantarum).